We begin with the raw amino-acid sequence, 295 residues long: Elongation factor Ts (295 aa).

Residues 79–82 (TDFV) form an involved in Mg(2+) ion dislocation from EF-Tu region.

This sequence belongs to the EF-Ts family.

The protein resides in the cytoplasm. Its function is as follows. Associates with the EF-Tu.GDP complex and induces the exchange of GDP to GTP. It remains bound to the aminoacyl-tRNA.EF-Tu.GTP complex up to the GTP hydrolysis stage on the ribosome. The sequence is that of Elongation factor Ts from Bacillus cereus (strain ATCC 10987 / NRS 248).